A 113-amino-acid chain; its full sequence is Large ribosomal subunit protein bL19 (113 aa).

It belongs to the bacterial ribosomal protein bL19 family.

In terms of biological role, this protein is located at the 30S-50S ribosomal subunit interface and may play a role in the structure and function of the aminoacyl-tRNA binding site. The polypeptide is Large ribosomal subunit protein bL19 (rplS) (Mycobacterium bovis (strain ATCC BAA-935 / AF2122/97)).